Here is a 106-residue protein sequence, read N- to C-terminus: L-rhamnose mutarotase (106 aa).

Position 20 (Tyr-20) interacts with substrate. The active-site Proton donor is His-24. Substrate is bound by residues Tyr-43 and 78 to 79; that span reads WW.

It belongs to the rhamnose mutarotase family. As to quaternary structure, homodimer.

It is found in the cytoplasm. It catalyses the reaction alpha-L-rhamnose = beta-L-rhamnose. It functions in the pathway carbohydrate metabolism; L-rhamnose metabolism. Functionally, involved in the anomeric conversion of L-rhamnose. This Rhizobium etli (strain ATCC 51251 / DSM 11541 / JCM 21823 / NBRC 15573 / CFN 42) protein is L-rhamnose mutarotase.